The sequence spans 250 residues: HTH-type transcriptional regulator SarS (250 aa).

2 DNA-binding regions (H-T-H motif) span residues 53 to 76 (FKKI…VLVK) and 177 to 200 (LKDL…NLKK).

It belongs to the SarA family.

It localises to the cytoplasm. Functionally, transcriptional regulator that controls expression of some virulence factors in a cell density-dependent manner. This chain is HTH-type transcriptional regulator SarS (sarS), found in Staphylococcus aureus (strain MRSA252).